We begin with the raw amino-acid sequence, 501 residues long: Putative BTB/POZ domain-containing protein L107 (501 aa).

In terms of domain architecture, BTB spans 16-87 (TDLELTLVDS…FYITDIERSQ (72 aa)).

Belongs to the mimivirus BTB/WD family.

The sequence is that of Putative BTB/POZ domain-containing protein L107 from Acanthamoeba polyphaga mimivirus (APMV).